A 321-amino-acid chain; its full sequence is Beta-ketoacyl-[acyl-carrier-protein] synthase III (321 aa).

Active-site residues include Cys113 and His246. The ACP-binding stretch occupies residues Gln247 to Arg251. Residue Asn276 is part of the active site.

The protein belongs to the thiolase-like superfamily. FabH family. Homodimer.

It is found in the cytoplasm. The enzyme catalyses malonyl-[ACP] + acetyl-CoA + H(+) = 3-oxobutanoyl-[ACP] + CO2 + CoA. It functions in the pathway lipid metabolism; fatty acid biosynthesis. In terms of biological role, catalyzes the condensation reaction of fatty acid synthesis by the addition to an acyl acceptor of two carbons from malonyl-ACP. Catalyzes the first condensation reaction which initiates fatty acid synthesis and may therefore play a role in governing the total rate of fatty acid production. Possesses both acetoacetyl-ACP synthase and acetyl transacylase activities. Its substrate specificity determines the biosynthesis of branched-chain and/or straight-chain of fatty acids. The chain is Beta-ketoacyl-[acyl-carrier-protein] synthase III from Enterococcus faecalis (strain ATCC 700802 / V583).